The primary structure comprises 2474 residues: Serine/threonine-protein kinase TOR2 (2474 aa).

The tract at residues 1–62 (MNKYINKYTT…NGPNDSGRVI (62 aa)) is disordered. The residue at position 10 (threonine 10) is a Phosphothreonine. Residues 25–36 (HRTRKKLTHKSH) show a composition bias toward basic residues. The span at 43-56 (STTSNTDSNHNGPN) shows a compositional bias: polar residues. 11 HEAT repeats span residues 588–626 (YSLT…KDDI), 636–674 (HSVS…PQLA), 676–710 (PDNL…VNPA), 756–793 (PYID…VGGK), 797–835 (RYLK…SSGY), 841–879 (LDYP…LDPY), 917–955 (YYPT…NLGL), 1039–1076 (RFVP…FGPN), 1079–1116 (DYSH…NINL), 1118–1155 (EMSS…QLGT), and 1292–1331 (SYQE…DDKP). The FAT domain occupies 1338 to 1922 (TLGKYAQKCH…VYPLMVAIKS (585 aa)). Positions 2097–2421 (FEPVFSVISS…EHKNAIRNAR (325 aa)) constitute a PI3K/PI4K catalytic domain. A G-loop region spans residues 2103 to 2109 (VISSKQR). A catalytic loop region spans residues 2276–2284 (GLGDRHPSN). Residues 2296–2321 (HIDFGDCFEAAILREKFPEKVPFRLT) form an activation loop region. The FATC domain occupies 2442-2474 (NDLDVPEQVDKLIQQATSVENLCQHYIGWCPFW).

This sequence belongs to the PI3/PI4-kinase family. The target of rapamycin complex 1 (TORC1) is composed of at least KOG1, LST8, TCO89 and either TOR1 (TORC1-A) or TOR2 (TORC1-B). TORC1 binds to and is inhibited by FKBP-rapamycin. Interacts with PIB2; following activation of PIB2 by glutamine. The target of rapamycin complex 2 (TORC2) is composed of at least AVO1, AVO2, BIT61, LST8, TOR2 and TSC11. TORC2 forms a homodimer. Contrary to TORC1, TORC2 does not bind to and is not sensitive to FKBP-rapamycin. Interacts with SLM1 and SLM2.

It is found in the cell membrane. The protein localises to the vacuole membrane. The catalysed reaction is L-seryl-[protein] + ATP = O-phospho-L-seryl-[protein] + ADP + H(+). It catalyses the reaction L-threonyl-[protein] + ATP = O-phospho-L-threonyl-[protein] + ADP + H(+). The enzyme catalyses a 1,2-diacyl-sn-glycero-3-phospho-(1D-myo-inositol) + ATP = a 1,2-diacyl-sn-glycero-3-phospho-(1D-myo-inositol 4-phosphate) + ADP + H(+). Phosphatidylinositol 3-kinase homolog, component of both TORC1 and TORC2. TORC1 regulates multiple cellular processes to control cell growth in response to environmental signals. Nutrient limitation and environmental stress signals cause inactivation of TORC1. Active TORC1 positively controls ribosome biogenesis via control of rRNA, ribosomal protein and tRNA gene expression, and rRNA processing. TORC1 positively controls protein biosynthesis by regulation of mRNA stability, translation initiation factor activity, and high-affinity amino acid permeases that serve to provide amino acids for use by the translation machinery. TORC1 also promotes growth by sequestering a number of nutrient and general stress-responsive transcription factors in the cytoplasm. TORC1 negatively controls macroautophagy, a process to recycle surplus cytoplasmic mass under nutrient starvation conditions. TORC1 controls many of these processes via TIP41-TAP42-mediated inhibition of the type 2A-related phosphatases PP2A and SIT4. In nutrient-rich conditions, responsible for the phosphorylation of AGC S6 kinase (S6K) YPK3, activating YPK3 kinase activity and promoting phosphorylation of ribosomal protein S6. Phosphorylates kinase SCH9 at 6 amino acids in the C-terminus, activating SCH9 kinase activity to properly regulate ribosome biogenesis, translation initiation, and entry into stationary phase. TORC2 regulates cell cycle-dependent polarization of the actin-cytoskeleton, cell wall integrity, and receptor endocytosis. TORC2 controls polarity of the actin cytoskeleton, which is required for orienting the secretory pathway toward discrete growth sites, via the RHO1/PKC1/MAPK cell integrity pathway by activating the RHO1 guanine nucleotide exchange factor ROM2. TORC2 phosphorylates the AGC kinase YPK2, an upstream effector of the cell integrity pathway. TORC2 negatively regulates calcineurin-dependent stress signaling via phosphorylation of its effector SLM1-SLM2. This is Serine/threonine-protein kinase TOR2 (TOR2) from Saccharomyces cerevisiae (strain ATCC 204508 / S288c) (Baker's yeast).